The following is an 825-amino-acid chain: Probable ATP-dependent RNA helicase DDX20 (825 aa).

The tract at residues 27–50 (PVQAVEPTPASPWTQRTAHDIGGP) is disordered. Residues 63 to 91 (ADFESLLLSRPVLEGLRAAGFERPSPVQL) carry the Q motif motif. ATP contacts are provided by residues Arg-85, Gln-90, 107-114 (AKSGTGKT), and 110-115 (GTGKTC). The Helicase ATP-binding domain occupies 94 to 265 (IPLGRCGLDL…TRYMRDPTFV (172 aa)). At Ser-188 the chain carries Phosphoserine. Positions 212–215 (DEAD) match the DEAD box motif. Ser-270 is modified (phosphoserine). Residues 300–449 (HLQELFSKVP…PIPPGLMEEC (150 aa)) form the Helicase C-terminal domain. Composition is skewed to polar residues over residues 465 to 475 (SPTVATQSPKK) and 484 to 504 (FQSQ…SASA). Disordered stretches follow at residues 465-573 (SPTV…PGSL) and 642-753 (QMLV…EPQE). Ser-472, Ser-501, and Ser-506 each carry phosphoserine. Residues 508–518 (RPKHSKPKLPV) are compositionally biased toward basic residues. Polar residues predominate over residues 547-571 (KNSVQTSVEDSSSNSQHQAKDSSPG). Thr-552 carries the post-translational modification Phosphothreonine. Residues Ser-561, Ser-653, Ser-655, Ser-657, Ser-673, Ser-678, and Ser-679 each carry the phosphoserine modification. The span at 646–668 (SSSQSGDSESDSDSCSSRTSSQS) shows a compositional bias: low complexity. Thr-689 and Thr-706 each carry phosphothreonine. The span at 698–711 (EQVQNGNDTPTQVE) shows a compositional bias: polar residues. Over residues 733 to 744 (KQSRRNPARRSS) the composition is skewed to basic residues.

The protein belongs to the DEAD box helicase family. DDX20 subfamily. In terms of assembly, part of the core SMN complex that contains SMN1, GEMIN2/SIP1, DDX20/GEMIN3, GEMIN4, GEMIN5, GEMIN6, GEMIN7, GEMIN8 and STRAP/UNRIP. Part of the SMN-Sm complex that contains SMN1, GEMIN2/SIP1, DDX20/GEMIN3, GEMIN4, GEMIN5, GEMIN6, GEMIN7, GEMIN8, STRAP/UNRIP and the Sm proteins SNRPB, SNRPD1, SNRPD2, SNRPD3, SNRPE, SNRPF and SNRPG. Interacts with SMN1; the interaction is direct. Interacts with GEMIN4; the interaction is direct. Interacts with GEMIN5. Interacts with SNUPN; the interaction is direct. Interacts with PPP4R2. Interacts with FOXL2. Interacts with NANOS1 and PUM2.

The protein resides in the cytoplasm. The protein localises to the nucleus. Its subcellular location is the gem. It catalyses the reaction ATP + H2O = ADP + phosphate + H(+). The enzyme catalyses a ribonucleoside 5'-triphosphate + H2O = a ribonucleoside 5'-diphosphate + phosphate + H(+). Functionally, the SMN complex catalyzes the assembly of small nuclear ribonucleoproteins (snRNPs), the building blocks of the spliceosome, and thereby plays an important role in the splicing of cellular pre-mRNAs. Most spliceosomal snRNPs contain a common set of Sm proteins SNRPB, SNRPD1, SNRPD2, SNRPD3, SNRPE, SNRPF and SNRPG that assemble in a heptameric protein ring on the Sm site of the small nuclear RNA to form the core snRNP (Sm core). In the cytosol, the Sm proteins SNRPD1, SNRPD2, SNRPE, SNRPF and SNRPG are trapped in an inactive 6S pICln-Sm complex by the chaperone CLNS1A that controls the assembly of the core snRNP. To assemble core snRNPs, the SMN complex accepts the trapped 5Sm proteins from CLNS1A forming an intermediate. Binding of snRNA inside 5Sm triggers eviction of the SMN complex, thereby allowing binding of SNRPD3 and SNRPB to complete assembly of the core snRNP. May also play a role in the metabolism of small nucleolar ribonucleoprotein (snoRNPs). This is Probable ATP-dependent RNA helicase DDX20 (Ddx20) from Mus musculus (Mouse).